The following is a 327-amino-acid chain: Voltage-dependent calcium channel gamma-4 subunit (327 aa).

The Cytoplasmic portion of the chain corresponds to 1-9 (MVRCDRGLQ). A helical membrane pass occupies residues 10-30 (MLLTTAGAFAAFSLMAIAIGT). At 31 to 107 (DYWLYSSAHI…EYLLRIVRAS (77 aa)) the chain is on the extracellular side. N-linked (GlcNAc...) asparagine glycosylation is found at asparagine 42 and asparagine 45. The chain crosses the membrane as a helical span at residues 108–128 (SVFPILSTILLLLGGLCIGAG). Topologically, residues 129–136 (RIYSRKNN) are cytoplasmic. The chain crosses the membrane as a helical span at residues 137–157 (IVLSAGILFVAAGLSNIIGII). Residues 158–186 (VYISSNTGDPSDKRDEDKKNHYNYGWSFY) are Extracellular-facing. The chain crosses the membrane as a helical span at residues 187 to 207 (FGALSFIVAETVGVLAVNIYI). At 208–327 (EKNKELRFKT…SMLNRRTTPV (120 aa)) the chain is on the cytoplasmic side. Positions 235-261 (SYRYRRRRSRSSSRSTEASPSRDVSPM) are disordered. Over residues 246–256 (SSRSTEASPSR) the composition is skewed to low complexity. Phosphoserine is present on serine 259.

The protein belongs to the PMP-22/EMP/MP20 family. CACNG subfamily. Interacts with CACNA1C. Identified in a complex with the L-type calcium channel subunits CACNA1C, CACNA2D1 and either CACNB1 or CACNB2. Acts as an auxiliary subunit for AMPA-selective glutamate receptors (AMPARs). Interacts with GRIA1. In terms of tissue distribution, detected in heart left ventricle.

Its subcellular location is the cell membrane. Functionally, regulates the activity of L-type calcium channels that contain CACNA1C as pore-forming subunit. Regulates the trafficking and gating properties of AMPA-selective glutamate receptors (AMPARs), including GRIA1 and GRIA4. Promotes their targeting to the cell membrane and synapses and modulates their gating properties by slowing their rates of activation, deactivation and desensitization and by mediating their resensitization. This Homo sapiens (Human) protein is Voltage-dependent calcium channel gamma-4 subunit (CACNG4).